Consider the following 186-residue polypeptide: Translation initiation factor IF-3 (186 aa).

Belongs to the IF-3 family. As to quaternary structure, monomer.

It is found in the cytoplasm. Its function is as follows. IF-3 binds to the 30S ribosomal subunit and shifts the equilibrium between 70S ribosomes and their 50S and 30S subunits in favor of the free subunits, thus enhancing the availability of 30S subunits on which protein synthesis initiation begins. The protein is Translation initiation factor IF-3 of Chlamydia caviae (strain ATCC VR-813 / DSM 19441 / 03DC25 / GPIC) (Chlamydophila caviae).